The following is a 329-amino-acid chain: Alpha/beta hydrolase domain-containing protein 17C (329 aa).

Residues 46–85 (APEQRGPGAPAPASAASTSSASAAAQPAPQQPEEGGAGPG) form a disordered region. Positions 51–79 (GPGAPAPASAASTSSASAAAQPAPQQPEE) are enriched in low complexity. Catalysis depends on charge relay system residues Ser211, Asp276, and His305.

It belongs to the AB hydrolase superfamily. ABHD17 family. In terms of processing, palmitoylated on cysteine residues located in a cysteine cluster at the N-terminus which promotes membrane localization. Palmitoylation is required for post-synaptic localization and for depalmitoylating activity towards DLG4/PSD95.

It is found in the recycling endosome membrane. The protein resides in the cell projection. It localises to the dendritic spine. The protein localises to the postsynaptic density membrane. The catalysed reaction is S-hexadecanoyl-L-cysteinyl-[protein] + H2O = L-cysteinyl-[protein] + hexadecanoate + H(+). Functionally, hydrolyzes fatty acids from S-acylated cysteine residues in proteins. Has depalmitoylating activity towards NRAS and DLG4/PSD95. The chain is Alpha/beta hydrolase domain-containing protein 17C from Bos taurus (Bovine).